The chain runs to 163 residues: Bursicon (163 aa).

The signal sequence occupies residues 1–23; it reads MKSTFLVVLELAFFLLPGRVLYA. Cystine bridges form between C39–C88, C53–C102, C63–C123, C67–C125, and C85–C128. Residues 39–129 form the CTCK domain; that stretch reads CQVTPVIHVL…PLECMCRPCT (91 aa).

Heterodimer of burs and pburs.

The protein resides in the secreted. Its function is as follows. Final heterodimeric neurohormone released at the end of the molting cycle, involved in the sclerotization (tanning) of the insect cuticle, melanization and wing spreading. The chain is Bursicon (burs124) from Anopheles gambiae (African malaria mosquito).